Reading from the N-terminus, the 368-residue chain is Type 2 DNA topoisomerase 6 subunit A (368 aa).

The region spanning 9–148 is the Topo IIA-type catalytic domain; the sequence is PDTEEAREQL…FHMRPEESGA (140 aa). The O-(5'-phospho-DNA)-tyrosine intermediate role is filled by tyrosine 103. 2 residues coordinate Mg(2+): glutamate 201 and aspartate 253.

Belongs to the TOP6A family. In terms of assembly, homodimer. Heterotetramer of two Top6A and two Top6B chains. Mg(2+) serves as cofactor.

The catalysed reaction is ATP-dependent breakage, passage and rejoining of double-stranded DNA.. Its function is as follows. Relaxes both positive and negative superturns and exhibits a strong decatenase activity. The chain is Type 2 DNA topoisomerase 6 subunit A from Haloarcula marismortui (strain ATCC 43049 / DSM 3752 / JCM 8966 / VKM B-1809) (Halobacterium marismortui).